The primary structure comprises 453 residues: UDP-N-acetylmuramoylalanine--D-glutamate ligase (453 aa).

115 to 121 (GTNGKTT) contacts ATP.

Belongs to the MurCDEF family.

It localises to the cytoplasm. It carries out the reaction UDP-N-acetyl-alpha-D-muramoyl-L-alanine + D-glutamate + ATP = UDP-N-acetyl-alpha-D-muramoyl-L-alanyl-D-glutamate + ADP + phosphate + H(+). It participates in cell wall biogenesis; peptidoglycan biosynthesis. Functionally, cell wall formation. Catalyzes the addition of glutamate to the nucleotide precursor UDP-N-acetylmuramoyl-L-alanine (UMA). This chain is UDP-N-acetylmuramoylalanine--D-glutamate ligase, found in Geotalea uraniireducens (strain Rf4) (Geobacter uraniireducens).